The sequence spans 454 residues: Chromosomal replication initiator protein DnaA (454 aa).

The tract at residues methionine 1–tyrosine 79 is domain I, interacts with DnaA modulators. The domain II stretch occupies residues tyrosine 79–serine 117. A domain III, AAA+ region region spans residues asparagine 118–serine 334. ATP is bound by residues glycine 162, glycine 164, lysine 165, and threonine 166. The domain IV, binds dsDNA stretch occupies residues arginine 335–lysine 454.

This sequence belongs to the DnaA family. As to quaternary structure, oligomerizes as a right-handed, spiral filament on DNA at oriC.

Its subcellular location is the cytoplasm. In terms of biological role, plays an essential role in the initiation and regulation of chromosomal replication. ATP-DnaA binds to the origin of replication (oriC) to initiate formation of the DNA replication initiation complex once per cell cycle. Binds the DnaA box (a 9 base pair repeat at the origin) and separates the double-stranded (ds)DNA. Forms a right-handed helical filament on oriC DNA; dsDNA binds to the exterior of the filament while single-stranded (ss)DNA is stabiized in the filament's interior. The ATP-DnaA-oriC complex binds and stabilizes one strand of the AT-rich DNA unwinding element (DUE), permitting loading of DNA polymerase. After initiation quickly degrades to an ADP-DnaA complex that is not apt for DNA replication. Binds acidic phospholipids. This chain is Chromosomal replication initiator protein DnaA, found in Buchnera aphidicola subsp. Acyrthosiphon pisum (strain 5A).